The primary structure comprises 208 residues: Protein-L-isoaspartate O-methyltransferase (208 aa).

Ser59 is an active-site residue.

The protein belongs to the methyltransferase superfamily. L-isoaspartyl/D-aspartyl protein methyltransferase family.

The protein resides in the cytoplasm. The catalysed reaction is [protein]-L-isoaspartate + S-adenosyl-L-methionine = [protein]-L-isoaspartate alpha-methyl ester + S-adenosyl-L-homocysteine. Its function is as follows. Catalyzes the methyl esterification of L-isoaspartyl residues in peptides and proteins that result from spontaneous decomposition of normal L-aspartyl and L-asparaginyl residues. It plays a role in the repair and/or degradation of damaged proteins. This chain is Protein-L-isoaspartate O-methyltransferase, found in Photorhabdus laumondii subsp. laumondii (strain DSM 15139 / CIP 105565 / TT01) (Photorhabdus luminescens subsp. laumondii).